The chain runs to 122 residues: Lysozyme (122 aa).

Positions 3 to 118 (GGIVSQRCLS…WNRLQKISGC (116 aa)) constitute an I-type lysozyme domain. 7 disulfide bridges follow: C10–C86, C13–C118, C15–C21, C26–C35, C48–C68, C58–C64, and C82–C100. E18 functions as the Proton donor in the catalytic mechanism. D29 serves as the catalytic Nucleophile. 41-47 (KEAYWID) contributes to the substrate binding site. Residues Y72, H93, 93–95 (HNG), and K102 contribute to the substrate site.

Belongs to the glycosyl hydrolase 22 family. Type-I lysozyme subfamily. As to quaternary structure, monomer.

It localises to the secreted. The enzyme catalyses Hydrolysis of (1-&gt;4)-beta-linkages between N-acetylmuramic acid and N-acetyl-D-glucosamine residues in a peptidoglycan and between N-acetyl-D-glucosamine residues in chitodextrins.. Has bacteriolytic activity against Gram-positive bacteria M.luteus. Also has chitinase activity. This Meretrix lusoria (Hard clam) protein is Lysozyme.